Reading from the N-terminus, the 302-residue chain is tRNA-cytidine(32) 2-sulfurtransferase (302 aa).

A PP-loop motif motif is present at residues 45 to 50; that stretch reads SGGKDS. [4Fe-4S] cluster is bound by residues cysteine 120, cysteine 123, and cysteine 211.

Belongs to the TtcA family. In terms of assembly, homodimer. Mg(2+) is required as a cofactor. [4Fe-4S] cluster serves as cofactor.

It localises to the cytoplasm. It carries out the reaction cytidine(32) in tRNA + S-sulfanyl-L-cysteinyl-[cysteine desulfurase] + AH2 + ATP = 2-thiocytidine(32) in tRNA + L-cysteinyl-[cysteine desulfurase] + A + AMP + diphosphate + H(+). The protein operates within tRNA modification. Its function is as follows. Catalyzes the ATP-dependent 2-thiolation of cytidine in position 32 of tRNA, to form 2-thiocytidine (s(2)C32). The sulfur atoms are provided by the cysteine/cysteine desulfurase (IscS) system. This chain is tRNA-cytidine(32) 2-sulfurtransferase, found in Cellvibrio japonicus (strain Ueda107) (Pseudomonas fluorescens subsp. cellulosa).